A 366-amino-acid chain; its full sequence is Inactive protein RESTRICTED TEV MOVEMENT 2 (366 aa).

One can recognise a sHSP domain in the interval 14 to 121; it reads VQYEDFVPKS…LPETSRTEAA (108 aa). One copy of the A-1 repeat lies at 129–133; that stretch reads LEEKR. The segment at 129–220 is 6 X 5 AA repeats A of L-E-E-[SKR]-[ERK]; sequence LEEKRLLEES…LEERRLEERK (92 aa). The stretch at 135–139 is one A-2 repeat; the sequence is LEESR. An A-3 repeat occupies 156-160; it reads LEEKE. The B-1 repeat unit spans residues 163–176; it reads IRKLQEEAKAKEEA. Positions 163-206 are 3 X 14 AA repeats B of [IMA]-[RK]-K-L-Q-E-E-A-K-A-K-E-[EK]-[LA]; it reads IRKLQEEAKAKEEAEMRKLQEEAKANEEAAAKKLQEEIEAKEKL. One copy of the B-2 repeat lies at 178–191; the sequence is MRKLQEEAKANEEA. A B-3 repeat occupies 193–205; the sequence is AKKLQEEIEAKEK. Residues 206–210 form an A-4 repeat; it reads LEERK. An A-5 repeat occupies 211–215; sequence LEERR. One copy of the A-6 repeat lies at 216–220; it reads LEERK. The helical transmembrane segment at 322-342 threads the bilayer; the sequence is LMMNVGVAALVIFALGAYVSY. Residues 345 to 366 are disordered; it reads CSSSSSSSSSSPSSSSSSTKPE. A compositionally biased stretch (low complexity) spans 346-366; the sequence is SSSSSSSSSSPSSSSSSTKPE.

It belongs to the small heat shock protein (HSP20) family.

It is found in the cell membrane. Its function is as follows. Seems to not be involved in heat resistance. Unable to mediate restriction of long-distance movement of the pathogenic tobacco etch virus (TEV) without causing a hypersensitive response or inducing systemic acquired resistance. This Arabidopsis thaliana (Mouse-ear cress) protein is Inactive protein RESTRICTED TEV MOVEMENT 2 (RTM2).